The chain runs to 444 residues: Acetyl-CoA--deacetylcephalosporin C acetyltransferase (444 aa).

The propeptide occupies 1–71; the sequence is MLPSAQVARL…PQIANRFEAS (71 aa). In terms of domain architecture, AB hydrolase-1 spans 112 to 425; sequence VIVCHTLTSS…DTNEGHDFFV (314 aa). Catalysis depends on residues S208 and H421.

It belongs to the AB hydrolase superfamily. MetX family. As to quaternary structure, heterodimer of chain I and chain II.

The enzyme catalyses deacetylcephalosporin C + acetyl-CoA = cephalosporin C + CoA. The protein operates within antibiotic biosynthesis; cephalosporin C biosynthesis. Its function is as follows. Catalyzes the conversion of deacetylcephalosporin C to cephalosporin C. The protein is Acetyl-CoA--deacetylcephalosporin C acetyltransferase (CEFG) of Hapsidospora chrysogena (Acremonium chrysogenum).